The primary structure comprises 349 residues: Galanin receptor type 1 (349 aa).

Residues 1-36 lie on the Extracellular side of the membrane; the sequence is MELAVGNLSEGNASWPEPPAPEPGPLFGIGVENFVT. N-linked (GlcNAc...) asparagine glycosylation is found at Asn7 and Asn12. Residues 37–57 form a helical membrane-spanning segment; the sequence is LVVFGLIFALGVLGNSLVITV. Residues 58-70 lie on the Cytoplasmic side of the membrane; that stretch reads LARSKPGKPRSTT. The chain crosses the membrane as a helical span at residues 71–91; it reads NLFILNLSIADLAYLLFCIPF. The Extracellular portion of the chain corresponds to 92–109; that stretch reads QATVYALPTWVLGAFICK. An intrachain disulfide couples Cys108 to Cys187. Residues 110-131 form a helical membrane-spanning segment; the sequence is FIHYFFTVSMLVSIFTLAAMSV. The Cytoplasmic segment spans residues 132–151; the sequence is DRYVAIVHSRRSSSLRVSRN. A helical transmembrane segment spans residues 152-172; it reads ALLGVGCIWALSIAMASPVAY. The Extracellular portion of the chain corresponds to 173–200; sequence HQGLFHPRASNQTFCWEQWPDPRHKKAY. A glycan (N-linked (GlcNAc...) asparagine) is linked at Asn183. Residues 201–221 form a helical membrane-spanning segment; sequence VVCTFVFGYLLPLLLICFCYA. Residues 222 to 248 lie on the Cytoplasmic side of the membrane; the sequence is KVLNHLHKKLKNMSKKSEASKKKTAQT. A helical transmembrane segment spans residues 249 to 269; it reads VLVVVVVFGISWLPHHIIHLW. At 270–271 the chain is on the extracellular side; it reads AE. Residues 272–292 form a helical membrane-spanning segment; the sequence is FGVFPLTPASFLFRITAHCLA. The Cytoplasmic segment spans residues 293-349; the sequence is YSNSSVNPIIYAFLSENFRKAYKQVFKCHIRKDSHLSDTKESKSRIDTPPSTNCTHV. Residue Cys320 is the site of S-palmitoyl cysteine attachment.

The protein belongs to the G-protein coupled receptor 1 family. In terms of assembly, interacts with GRP39 AND HTR1A. Palmitoylated on at least one of the three cysteine residues present in the C-terminal part.

The protein localises to the cell membrane. Its function is as follows. Receptor for the hormone galanin. The activity of this receptor is mediated by G proteins that inhibit adenylate cyclase activity. This chain is Galanin receptor type 1 (GALR1), found in Homo sapiens (Human).